The sequence spans 108 residues: Glutaredoxin (108 aa).

A Glutaredoxin domain is found at 3–103; the sequence is LAKAKEIVSG…PLLTEAGAIA (101 aa). The cysteines at positions 23 and 26 are disulfide-linked.

It belongs to the glutaredoxin family. CPYC subfamily.

The protein localises to the cytoplasm. Functionally, has a glutathione-disulfide oxidoreductase activity in the presence of NADPH and glutathione reductase. Reduces low molecular weight disulfides and proteins. This chain is Glutaredoxin, found in Solanum lycopersicum (Tomato).